A 353-amino-acid chain; its full sequence is UPF0283 membrane protein YcjF (353 aa).

The segment covering 1-19 (MSEPLKPRIDFAEPLKEEP) has biased composition (basic and acidic residues). The interval 1–35 (MSEPLKPRIDFAEPLKEEPTSAFKAQQTFSEAESR) is disordered. Transmembrane regions (helical) follow at residues 70 to 90 (MVMGGLALFGASVVGQGVQWT), 100 to 120 (VALGGCAAGALIIGAGVGSVV), and 213 to 233 (ESTLMIAVSPLALVDMAFIAW).

It belongs to the UPF0283 family.

It is found in the cell inner membrane. This is UPF0283 membrane protein YcjF from Salmonella paratyphi C (strain RKS4594).